We begin with the raw amino-acid sequence, 169 residues long: MDPLKICENYLTFRSIIKGSTFSPGVFRRWRFHALADVVGNIVEREEGRFWEIVPETHTLWALFRGGFTVAPFTEILTSLQLENRGRQLAFLAFLSFLLRNWPSDSVVSEDARLDLVCAPAWSRIQIWSQAARLINDLPESVFEGQGSVVEEECGEEHLARDSDDPLFD.

This sequence belongs to the adenoviridae E1B 19 kDa protein family.

This chain is E1B protein, small T-antigen, found in Canine adenovirus serotype 1 (strain CLL) (CAdV-1).